A 557-amino-acid chain; its full sequence is Beta-amylase 2, chloroplastic (557 aa).

A chloroplast-targeting transit peptide spans 1–38 (MMSLNLAHQTGAAAAVAPAAPRTAVVAAAAGTVSAPAV). The substrate site is built by aspartate 135, histidine 175, and aspartate 183. Glutamate 267 functions as the Proton donor in the catalytic mechanism. Residues lysine 380, histidine 385, and threonine 427 each coordinate substrate. The active-site Proton acceptor is the glutamate 465. Residues 466 to 467 (NA) and arginine 499 contribute to the substrate site.

The protein belongs to the glycosyl hydrolase 14 family.

The protein localises to the plastid. Its subcellular location is the chloroplast. It carries out the reaction Hydrolysis of (1-&gt;4)-alpha-D-glucosidic linkages in polysaccharides so as to remove successive maltose units from the non-reducing ends of the chains.. Possesses beta-amylase activity in vitro. May be involved in cold resistance by mediating the accumulation of maltose upon freezing stress, thus contributing to the protection of membranes. In Oryza sativa subsp. japonica (Rice), this protein is Beta-amylase 2, chloroplastic.